Here is a 338-residue protein sequence, read N- to C-terminus: H(2)-forming methylenetetrahydromethanopterin dehydrogenase-related protein MJ0715 (338 aa).

This sequence belongs to the HMD family.

This chain is H(2)-forming methylenetetrahydromethanopterin dehydrogenase-related protein MJ0715, found in Methanocaldococcus jannaschii (strain ATCC 43067 / DSM 2661 / JAL-1 / JCM 10045 / NBRC 100440) (Methanococcus jannaschii).